Consider the following 166-residue polypeptide: Nicotine metabolites export pump subunit NepB (166 aa).

4 consecutive transmembrane segments (helical) span residues 51–71 (LHAW…TVIL), 77–97 (FQLP…FFLL), 108–128 (VAYA…GAII), and 133–153 (VTLG…ILNL).

The protein belongs to the drug/metabolite transporter (DMT) superfamily. Small multidrug resistance (SMR) (TC 2.A.7.1) family. NepA/NepB subfamily. In terms of assembly, the efflux pump is composed of NepA and NepB.

Its subcellular location is the cell membrane. Component of an efflux pump responsible for the transport of nicotine breakdown products, in particular methylamine, out of the cell. This pump apparently serves as a metabolic valve for nicotine catabolites and may protect the bacteria from the potentially toxic side effects of these compounds. The sequence is that of Nicotine metabolites export pump subunit NepB (nepB) from Paenarthrobacter nicotinovorans (Arthrobacter nicotinovorans).